The sequence spans 261 residues: Imidazole glycerol phosphate synthase subunit HisF (261 aa).

Active-site residues include Asp-11 and Asp-130.

This sequence belongs to the HisA/HisF family. As to quaternary structure, heterodimer of HisH and HisF.

It is found in the cytoplasm. The catalysed reaction is 5-[(5-phospho-1-deoxy-D-ribulos-1-ylimino)methylamino]-1-(5-phospho-beta-D-ribosyl)imidazole-4-carboxamide + L-glutamine = D-erythro-1-(imidazol-4-yl)glycerol 3-phosphate + 5-amino-1-(5-phospho-beta-D-ribosyl)imidazole-4-carboxamide + L-glutamate + H(+). The protein operates within amino-acid biosynthesis; L-histidine biosynthesis; L-histidine from 5-phospho-alpha-D-ribose 1-diphosphate: step 5/9. IGPS catalyzes the conversion of PRFAR and glutamine to IGP, AICAR and glutamate. The HisF subunit catalyzes the cyclization activity that produces IGP and AICAR from PRFAR using the ammonia provided by the HisH subunit. The chain is Imidazole glycerol phosphate synthase subunit HisF from Jannaschia sp. (strain CCS1).